The chain runs to 907 residues: MTQLTVKALSEEIGTPVDRLLEQLADAGMKKSSSDQVSDEEKQKLLTHLKKEHGDTSGDAEPTRLTLQRKTRSTLSVNAGGGKSKDVQIEVRKKRTYVKRSAIEDEAKREAEEAAQREAEEAAKRAAEEAAKREAEEAAKREAEEKAKREAEEAAKREAEKSVDRDAEEKAKRDAEGKAKRDAEEKVKQEAARKEAEELKRRQEEEAKRKAEEESQRKLEEAREMAEKNKERWSAAEENKGDMEDTDYHVTTSQYAREAEDEADRKEEEARRRKKKTKSSAKASENDERGGPRVQRGGKGGRKGKLSKPKSMQHGFDKSAVVAKSDVVIGETIVVSELANKMSVKATEVIKIMMKMGAMATINQVIDQETAQLVAEEMGHKVVLRKENELEEAVLSDRDNMFEAVPRAPVVTIMGHVDHGKTSTLDYIRRTHVASGEAGGITQHIGAYHVETENGMITFLDTPGHAAFTAMRARGAQATDIVVLVVAADDGVMPQTVEAIQHAKAAGVPLIVAVNKIDKEEANPDNVKNELSQYNVMPEEWGGENMFVHISAKQGTNIDQLLETILLQAEVLELTAVKEGMASGVVVESRLDKGRGPVATVLVQSGTLRKGDIVLCGQEYGRVRAMRDEIGNEVNEAGPSIPVEILGLSGVPAAGDEATVVRDERKAREVANYRAGKFREVKLARQQKSKLENMFSNMAAGDVAELNIVLKADVQGSVEAIADSLTKLSTEEVKVNIVGSGVGGITETDAVLAEASNAIILGFNVRADASARRAIEAASIDLRYYSIIYQLIDEVKQAMSGMLAPEFKQEIIGLAEVRDVFKSPKLGAIAGCMVTEGLIKRNAPIRVLRDNVVIYEGELESLRRFKDDVAEVKNGYECGIGVKNYNDVRVGDQIEVFETIEIKRTID.

Residues 26–317 (DAGMKKSSSD…KPKSMQHGFD (292 aa)) form a disordered region. Composition is skewed to basic and acidic residues over residues 28–44 (GMKKSSSDQVSDEEKQK) and 101–248 (SAIE…DTDY). Over residues 299-308 (KGGRKGKLSK) the composition is skewed to basic residues. The tr-type G domain maps to 406–575 (PRAPVVTIMG…LLQAEVLELT (170 aa)). The segment at 415-422 (GHVDHGKT) is G1. Position 415 to 422 (415 to 422 (GHVDHGKT)) interacts with GTP. The tract at residues 440–444 (GITQH) is G2. The G3 stretch occupies residues 461-464 (DTPG). Residues 461-465 (DTPGH) and 515-518 (NKID) contribute to the GTP site. The segment at 515–518 (NKID) is G4. The segment at 551–553 (SAK) is G5.

The protein belongs to the TRAFAC class translation factor GTPase superfamily. Classic translation factor GTPase family. IF-2 subfamily.

Its subcellular location is the cytoplasm. Functionally, one of the essential components for the initiation of protein synthesis. Protects formylmethionyl-tRNA from spontaneous hydrolysis and promotes its binding to the 30S ribosomal subunits. Also involved in the hydrolysis of GTP during the formation of the 70S ribosomal complex. The chain is Translation initiation factor IF-2 from Vibrio vulnificus (strain YJ016).